The following is a 431-amino-acid chain: Phosphoribosylamine--glycine ligase (431 aa).

The ATP-grasp domain occupies 107-315 (RWLMEEYKIP…LVEIGEEIVD (209 aa)). Residue 134-193 (IDDFGRPVVVKPLGLTGGKGVKVVGYQLKDNEEAKAYAEELIKRDGKVLIEERTDGVEFT) participates in ATP binding. The Mg(2+) site is built by Q273, E285, and N287. Positions 273, 285, and 287 each coordinate Mn(2+).

The protein belongs to the GARS family. It depends on Mg(2+) as a cofactor. The cofactor is Mn(2+).

It carries out the reaction 5-phospho-beta-D-ribosylamine + glycine + ATP = N(1)-(5-phospho-beta-D-ribosyl)glycinamide + ADP + phosphate + H(+). Its pathway is purine metabolism; IMP biosynthesis via de novo pathway; N(1)-(5-phospho-D-ribosyl)glycinamide from 5-phospho-alpha-D-ribose 1-diphosphate: step 2/2. The chain is Phosphoribosylamine--glycine ligase from Thermococcus kodakarensis (strain ATCC BAA-918 / JCM 12380 / KOD1) (Pyrococcus kodakaraensis (strain KOD1)).